The primary structure comprises 258 residues: Acyl-[acyl-carrier-protein]--UDP-N-acetylglucosamine O-acyltransferase (258 aa).

This sequence belongs to the transferase hexapeptide repeat family. LpxA subfamily. As to quaternary structure, homotrimer.

The protein localises to the cytoplasm. It catalyses the reaction a (3R)-hydroxyacyl-[ACP] + UDP-N-acetyl-alpha-D-glucosamine = a UDP-3-O-[(3R)-3-hydroxyacyl]-N-acetyl-alpha-D-glucosamine + holo-[ACP]. It participates in glycolipid biosynthesis; lipid IV(A) biosynthesis; lipid IV(A) from (3R)-3-hydroxytetradecanoyl-[acyl-carrier-protein] and UDP-N-acetyl-alpha-D-glucosamine: step 1/6. In terms of biological role, involved in the biosynthesis of lipid A, a phosphorylated glycolipid that anchors the lipopolysaccharide to the outer membrane of the cell. The sequence is that of Acyl-[acyl-carrier-protein]--UDP-N-acetylglucosamine O-acyltransferase from Pseudomonas putida (strain W619).